A 346-amino-acid chain; its full sequence is tRNA N6-adenosine threonylcarbamoyltransferase (346 aa).

3 residues coordinate Fe cation: H109, H113, and Y135. Substrate-binding positions include 135–139 (YVSGG), D167, G180, E184, and N263. D291 is a Fe cation binding site.

The protein belongs to the KAE1 / TsaD family. Monomer. Component of the KEOPS complex that consists of Kae1, Bud32, Cgi121 and Pcc1; the whole complex dimerizes. The cofactor is Fe(2+).

The protein resides in the cytoplasm. It carries out the reaction L-threonylcarbamoyladenylate + adenosine(37) in tRNA = N(6)-L-threonylcarbamoyladenosine(37) in tRNA + AMP + H(+). In terms of biological role, required for the formation of a threonylcarbamoyl group on adenosine at position 37 (t(6)A37) in tRNAs that read codons beginning with adenine. Is a component of the KEOPS complex that is probably involved in the transfer of the threonylcarbamoyl moiety of threonylcarbamoyl-AMP (TC-AMP) to the N6 group of A37. Kae1 likely plays a direct catalytic role in this reaction, but requires other protein(s) of the complex to fulfill this activity. The sequence is that of tRNA N6-adenosine threonylcarbamoyltransferase from Methanopyrus kandleri (strain AV19 / DSM 6324 / JCM 9639 / NBRC 100938).